A 166-amino-acid polypeptide reads, in one-letter code: Phospholipase A2 inhibitor clone 05 (166 aa).

A signal peptide spans 1 to 19 (MRLILLSSLLLLGIFLADG). In terms of domain architecture, C-type lectin spans 46–161 (LKGAFLTVHR…CDDNLLVVCE (116 aa)). 2 disulfides stabilise this stretch: cysteine 83–cysteine 160 and cysteine 138–cysteine 152. N-linked (GlcNAc...) asparagine glycosylation is present at asparagine 122.

Belongs to the alpha-type phospholipase A2 inhibitor family. Homotrimer; non-covalently linked. As to expression, expressed by the liver.

It is found in the secreted. Functionally, this phospholipase A2 inhibitor binds directly phospholipase A2 in the presence or absence of calcium. This Bothrops moojeni (Lance-headed viper) protein is Phospholipase A2 inhibitor clone 05.